We begin with the raw amino-acid sequence, 229 residues long: Protein 33K (229 aa).

The segment at 1-157 (MAPKKKLQLP…GALRLAPNEP (157 aa)) is disordered. A compositionally biased stretch (acidic residues) spans 14-54 (TDEEEYWDSQAEEVLDEEEEDMMEDWESLDEEASEVEEVSD). Composition is skewed to low complexity over residues 55–64 (ETPSPSVAFP), 71–82 (SATGSSMATTSA), and 100–122 (TTGT…AAAT). Residues 172–199 (YAIFQQSRGQEQELKIKNRSLRSLTRSC) form a necessary for nuclear subcellular location region. Positions 178–198 (SRGQEQELKIKNRSLRSLTRS) are RS-repeat; required for splicing enhancer activity.

Belongs to the adenoviridae splicing factor family. Homooligomer. Interacts with DBP; this interaction occurs at a unique vertex during genome packaging. Interacts with IVa2; this interaction occurs at a unique vertex during genome packaging and seems to potentiate IVa2 and 33K oligomerization. In terms of processing, phosphorylated in vitro by human PKA and PRKDC. PRKDC inhibits, whereas PKA activates the splicing factor.

Its subcellular location is the host nucleus. Functionally, promotes alternative splicing of late transcripts by promoting splicing at weak 3' splice sites. Required for the temporal activation of major late pre-mRNA splicing at late times of infection. Induces the splicing and expression of the late capsid vertex protein. Probably functions as the small terminase that is part of the molecular motor that translocates genomic DNA in empty capsid during DNA packaging. This motor is located at a unique vertex and comprises at least the IVa2 ATPase, the small terminase 33K and probably a portal. Forms a ring-like structure of about 17 nm in which genomic DNA is translocated into the capsid. Stimulates IVa2 ATPase activity in the presence of the viral genome. Once the DNA is packaged, the terminase detaches: the 33K protein is present in the empty particles, but not in the mature virions. Also involved in virion assembly. The polypeptide is Protein 33K (Homo sapiens (Human)).